The chain runs to 386 residues: Phosphoglycerate kinase (386 aa).

Substrate-binding positions include 21–23, Arg36, 59–62, Arg112, and Arg145; these read DLN and HLGR. Residues Lys196, Glu313, and 339 to 342 each bind ATP; that span reads GGDT.

Belongs to the phosphoglycerate kinase family. In terms of assembly, monomer.

It is found in the cytoplasm. The enzyme catalyses (2R)-3-phosphoglycerate + ATP = (2R)-3-phospho-glyceroyl phosphate + ADP. It functions in the pathway carbohydrate degradation; glycolysis; pyruvate from D-glyceraldehyde 3-phosphate: step 2/5. In Haemophilus influenzae (strain ATCC 51907 / DSM 11121 / KW20 / Rd), this protein is Phosphoglycerate kinase (pgk).